The primary structure comprises 1471 residues: ABC multidrug transporter F (1471 aa).

The segment covering Met-1–Glu-19 has biased composition (polar residues). Residues Met-1–Glu-40 form a disordered region. A glycan (N-linked (GlcNAc...) asparagine) is linked at Asn-4. Basic and acidic residues predominate over residues Gly-25–Glu-40. Residues Asn-71 and Asn-311 are each glycosylated (N-linked (GlcNAc...) asparagine). An ABC transporter 1 domain is found at Leu-133–Glu-387. A helical membrane pass occupies residues Val-498 to Tyr-518. A glycan (N-linked (GlcNAc...) asparagine) is linked at Asn-519. A run of 5 helical transmembrane segments spans residues Ala-532–Leu-552, Phe-578–Phe-598, Gly-607–Phe-627, Leu-641–Val-661, and Ile-751–Ala-771. The tract at residues Arg-791 to Val-819 is disordered. Residues Phe-829 to Gly-1071 form the ABC transporter 2 domain. An N-linked (GlcNAc...) asparagine glycan is attached at Asn-842. Gly-865–Thr-872 serves as a coordination point for ATP. 5 helical membrane passes run Tyr-1167–Phe-1187, Phe-1201–Phe-1221, Phe-1252–Leu-1272, Leu-1288–Ile-1308, and Ile-1326–Ile-1346. N-linked (GlcNAc...) asparagine glycans are attached at residues Asn-1386, Asn-1422, and Asn-1429. The helical transmembrane segment at Phe-1441 to Leu-1461 threads the bilayer.

Belongs to the ABC transporter superfamily. ABCG family. PDR (TC 3.A.1.205) subfamily.

The protein localises to the cell membrane. It catalyses the reaction fluconazole(in) + ATP + H2O = fluconazole(out) + ADP + phosphate + H(+). The enzyme catalyses itraconazole(in) + ATP + H2O = itraconazole(out) + ADP + phosphate + H(+). Its activity is regulated as follows. The efflux inhibitor FK506 impairs the transport activity. Pleiotropic ABC efflux transporter that shows a strong substrate specificity for the azole class of drugs such as lotrimazole (CLT), fluconazole (FLC), itraconazole (ITC), ketoconazole (KTC), posaconazole (POS), econazole (ECON), metconazole (MET), miconazole (MCZ), prochloraz (PCLZ), and tebuconazole (TEBZ). The sequence is that of ABC multidrug transporter F from Aspergillus fumigatus (strain ATCC MYA-4609 / CBS 101355 / FGSC A1100 / Af293) (Neosartorya fumigata).